A 307-amino-acid chain; its full sequence is Fructokinase (307 aa).

This sequence belongs to the carbohydrate kinase PfkB family.

It catalyses the reaction D-fructose + ATP = D-fructose 6-phosphate + ADP + H(+). This is Fructokinase (scrK) from Vibrio alginolyticus.